We begin with the raw amino-acid sequence, 400 residues long: Forkhead box protein Q1 (400 aa).

A disordered region spans residues 1–112 (MKLEVFVPRA…EGARSKPYTR (112 aa)). The segment covering 32–54 (LSAAGDDSLGSDGDCAANSPAAG) has biased composition (low complexity). Composition is skewed to gly residues over residues 55–66 (SGAGDLEGGGGE) and 95–104 (CAGGVGGGEG). Positions 115–210 (KPPYSYIALI…ADGVFRRRRK (96 aa)) form a DNA-binding region, fork-head. A disordered region spans residues 213-264 (SHRTTVSASGLRPEEAPPGPAGTPQPAPAARSSPIARSPARQEERSSPASKF). The span at 228-239 (APPGPAGTPQPA) shows a compositional bias: pro residues. Residues 240–251 (PAARSSPIARSP) show a composition bias toward low complexity.

As to expression, expressed in kidney and stomach. Expression in the outer medulla of the kidney and the transitional epithelium. Expressed in the hair follicle medulla.

The protein resides in the nucleus. Functionally, plays a role in hair follicle differentiation. In Mus musculus (Mouse), this protein is Forkhead box protein Q1 (Foxq1).